A 489-amino-acid chain; its full sequence is Potassium voltage-gated channel subfamily A member 7 (489 aa).

Residues 176 to 196 traverse the membrane as a helical segment; the sequence is VLAVVSVLVILVSIVVFCLET. A glycan (N-linked (GlcNAc...) asparagine) is linked at Asn224. A helical transmembrane segment spans residues 242–262; it reads FFVVETLCICWFSFELLVRLV. Cys264 carries S-palmitoyl cysteine lipidation. Residues 274-294 form a helical membrane-spanning segment; sequence VMNLIDFVAILPYFVALGTEL. The chain crosses the membrane as a helical; Voltage-sensor span at residues 309–328; that stretch reads ILRVIRLVRVFRIFKLSRHS. The helical transmembrane segment at 345 to 365 threads the bilayer; sequence LGLLIFFLFIGVVLFSSAVYF. A Selectivity filter motif is present at residues 391-396; the sequence is TVGYGD. A helical membrane pass occupies residues 406-426; sequence IVGSLCAIAGVLTISLPVPVI.

It belongs to the potassium channel family. A (Shaker) (TC 1.A.1.2) subfamily. Kv1.7/KCNA7 sub-subfamily. As to quaternary structure, heterotetramer of potassium channel proteins. In terms of tissue distribution, detected in heart, skeletal muscle, brain, and pancreatic islet cells.

It is found in the membrane. The enzyme catalyses K(+)(in) = K(+)(out). Mediates the voltage-dependent potassium ion permeability of excitable membranes. Assuming opened or closed conformations in response to the voltage difference across the membrane, the protein forms a potassium-selective channel through which potassium ions may pass in accordance with their electrochemical gradient. Channels formed by isoform 1 inactivate faster than channels formed by isoform 2. The protein is Potassium voltage-gated channel subfamily A member 7 (Kcna7) of Mus musculus (Mouse).